A 387-amino-acid chain; its full sequence is Beta-alanyl-dopamine/carcinine hydrolase (387 aa).

This sequence belongs to the peptidase C45 family. In terms of assembly, the unprocessed protein forms homodimers. May form heterodimers composed of a 15 kDa alpha subunit and a 30 kDa beta subunit. Post-translationally, the protein is synthesized as a 43 kDa precursor which is then self-processed into a 15 kDa alpha subunit and a 30 kDa beta subunit. Processing appears to be necessary for beta-alanyl-dopamine/carcinine hydrolase activity. The beta subunit carries the beta-alanyl-dopamine/carcinine hydrolase activity. As to expression, expressed in body, head, optic lobes and retina (at protein level). Expressed in photoreceptor cells R1-R6 in the lamina and in photoreceptor cells R7 and R8 in the medulla (at protein level).

It is found in the cell projection. The protein localises to the axon. The protein resides in the cytoplasm. It carries out the reaction carcinine + H2O = histamine + beta-alanine. The catalysed reaction is beta-alanyl-dopamine + H2O = dopamine + beta-alanine. Functionally, in the cuticle, catalyzes the hydrolysis of beta-alanyl-dopamine releasing dopamine and beta-alanine; dopamine is a metabolite involved in the pigmentation and sclerotization of the insect cuticle. In the photoreceptor cells, catalyzes the hydrolysis of carcinine releasing histamine and beta-alanine contributing to the recycling of the neurotransmitter histamine in the optical nerve system. Also, regulates the cuticular hydrocarbon composition in females. This chain is Beta-alanyl-dopamine/carcinine hydrolase, found in Drosophila melanogaster (Fruit fly).